Consider the following 306-residue polypeptide: D-alanine--D-alanine ligase B (306 aa).

Active-site residues include Glu-15 and Ser-150. Positions 101 to 303 (KLLWQGAGLP…FSQLVVRILE (203 aa)) constitute an ATP-grasp domain. 134-189 (ISALGLPVIVKPSREGSSVGMSKVVAENALQDALRLAFQHDEEVLIEKWLSGPEFT) contributes to the ATP binding site. The Mg(2+) site is built by Asp-257, Glu-270, and Asn-272. Ser-281 is an active-site residue.

It belongs to the D-alanine--D-alanine ligase family. Monomer. It depends on Mg(2+) as a cofactor. Requires Mn(2+) as cofactor.

It is found in the cytoplasm. The enzyme catalyses 2 D-alanine + ATP = D-alanyl-D-alanine + ADP + phosphate + H(+). Its pathway is cell wall biogenesis; peptidoglycan biosynthesis. In terms of biological role, cell wall formation. In Escherichia coli O157:H7, this protein is D-alanine--D-alanine ligase B (ddlB).